The primary structure comprises 60 residues: Ras-related protein Rab-2A (60 aa).

GTP-binding residues include serine 1, cysteine 2, and threonine 19. Serine 1 is a binding site for Mg(2+). Residues 16-24 carry the Effector region motif; sequence HDLTIGVEF. Residue threonine 19 participates in Mg(2+) binding.

The protein belongs to the small GTPase superfamily. Rab family. As to quaternary structure, interacts with PRKCI. Interacts with TRIP11. Interacts (in GTP-bound form) with GARIN1B. Interacts (GTP-bound) with HOPS complex component VPS39; interaction contributes to obtaining a functional HOPS complex that promotes autophagosome-lysosome membrane fusion driven by STX17-SNAP29-VAMP8. May interact with VPS41. Requires Mg(2+) as cofactor. In terms of processing, prenylated. Prenylation is required for association with cellular membranes.

The protein localises to the endoplasmic reticulum-Golgi intermediate compartment membrane. It localises to the melanosome. The protein resides in the endoplasmic reticulum membrane. Its subcellular location is the golgi apparatus membrane. It is found in the cytoplasmic vesicle. The protein localises to the secretory vesicle. It localises to the acrosome. The protein resides in the autophagosome membrane. It carries out the reaction GTP + H2O = GDP + phosphate + H(+). Regulated by guanine nucleotide exchange factors (GEFs) which promote the exchange of bound GDP for free GTP, GTPase activating proteins (GAPs) which increase the GTP hydrolysis activity, and GDP dissociation inhibitors (GDIs) which inhibit the dissociation of the nucleotide from the GTPase. In terms of biological role, the small GTPases Rab are key regulators of intracellular membrane trafficking, from the formation of transport vesicles to their fusion with membranes. Rabs cycle between active GTP-bound and inactive GDP-bound states. In their active state, drive transport of vesicular carriers from donor organelles to acceptor organelles to regulate the membrane traffic that maintains organelle identity and morphology. RAB2A regulates autophagy by promoting autophagosome-lysosome fusion via recruitment of the HOPS endosomal tethering complex; this process involves autophagosomal RAB2A and lysosomal RAB39A recruitment of HOPS subcomplexes VPS39-VPS11 and VPS41-VPS16-VPS18-VPS33A, respectively, which assemble into a functional complex to mediate membrane tethering and SNAREs-driven membrane fusion. Required for protein transport from the endoplasmic reticulum to the Golgi complex. Regulates the compacted morphology of the Golgi. Together with RAB2B, redundantly required for efficient autophagic flux. The polypeptide is Ras-related protein Rab-2A (Mesocricetus auratus (Golden hamster)).